Here is a 290-residue protein sequence, read N- to C-terminus: 6-carboxyhexanoate--CoA ligase (290 aa).

Belongs to the BioW family. As to quaternary structure, homodimer. The cofactor is Mg(2+).

The catalysed reaction is heptanedioate + ATP + CoA = 6-carboxyhexanoyl-CoA + AMP + diphosphate. It participates in metabolic intermediate metabolism; pimeloyl-CoA biosynthesis; pimeloyl-CoA from pimelate: step 1/1. Catalyzes the transformation of pimelate into pimeloyl-CoA with concomitant hydrolysis of ATP to AMP. This chain is 6-carboxyhexanoate--CoA ligase, found in Bacillus amyloliquefaciens (Bacillus velezensis).